Consider the following 304-residue polypeptide: Ribosomal RNA small subunit methyltransferase H (304 aa).

Residues 37–39 (GGH), D57, F79, D100, and H107 contribute to the S-adenosyl-L-methionine site.

Belongs to the methyltransferase superfamily. RsmH family.

The protein localises to the cytoplasm. It catalyses the reaction cytidine(1402) in 16S rRNA + S-adenosyl-L-methionine = N(4)-methylcytidine(1402) in 16S rRNA + S-adenosyl-L-homocysteine + H(+). In terms of biological role, specifically methylates the N4 position of cytidine in position 1402 (C1402) of 16S rRNA. This chain is Ribosomal RNA small subunit methyltransferase H, found in Bacteroides fragilis (strain YCH46).